The following is a 492-amino-acid chain: Adenosylhomocysteinase (492 aa).

Thr68, Asp153, and Glu215 together coordinate substrate. 216 to 218 lines the NAD(+) pocket; that stretch reads TTT. Residues Lys245 and Asp249 each contribute to the substrate site. NAD(+)-binding positions include Asn250, 279–284, Glu302, Asn337, 358–360, and Asn406; these read GYGDVG and IGH.

The protein belongs to the adenosylhomocysteinase family. NAD(+) is required as a cofactor.

It localises to the cytoplasm. It carries out the reaction S-adenosyl-L-homocysteine + H2O = L-homocysteine + adenosine. Its pathway is amino-acid biosynthesis; L-homocysteine biosynthesis; L-homocysteine from S-adenosyl-L-homocysteine: step 1/1. Its function is as follows. May play a key role in the regulation of the intracellular concentration of adenosylhomocysteine. The polypeptide is Adenosylhomocysteinase (Mycobacterium leprae (strain Br4923)).